Reading from the N-terminus, the 745-residue chain is Junction plakoglobin (745 aa).

The residue at position 1 (Met1) is an N-acetylmethionine. O-linked (GlcNAc) threonine glycosylation occurs at Thr14. Ser99 and Ser125 each carry phosphoserine. 12 ARM repeats span residues 132-171 (NYQDDAELATRALPELTKLLNDEDPVVVTKAAMIVNQLSK), 172-215 (KEAS…LSHH), 216-255 (REGLLAIFKSGGIPALVRMLSSPVESVLFYAITTLHNLLL), 258-297 (EGAKMAVRLADGLQKMVPLLNKNNPKFLAITTDCLQLLAY), 298-341 (GNQE…LSVC), 342-381 (PSNKPAIVEAGGMQALGKHLTSNSPRLVQNCLWTLRNLSD), 383-420 (ATKQEGLESVLKILVNQLSVDDVNVLTCATGTLSNLTC), 423-464 (SKNK…HLTS), 470-510 (EMAQ…NLAL), 512-551 (PANHAPLQEAAVIPRLVQLLVKAHQDAQRHVAAGTQQPYT), 574-613 (PMNRMEIFRLNTIPLFVQLLYSSVENIQRVAAGVLCELAQ), and 615-661 (KEAA…PDYR). The segment at 132–297 (NYQDDAELAT…TTDCLQLLAY (166 aa)) is interaction with DSC1 and DSG1. Ser182 is modified (phosphoserine). Residues 574–661 (PMNRMEIFRL…ISEDKNPDYR (88 aa)) form an interaction with DSC1 region. Phosphoserine is present on residues Ser665 and Ser730.

The protein belongs to the beta-catenin family. In terms of assembly, homodimer. Component of an E-cadherin/catenin adhesion complex composed of at least E-cadherin/CDH1 and gamma-catenin/JUP, and possibly alpha-catenin/CTNNA1; the complex is located to adherens junctions. The stable association of CTNNA1 is controversial as CTNNA1 was shown not to bind to F-actin when assembled in the complex. Interacts with MUC1. Interacts with CAV1. Interacts with PTPRJ. Interacts with DSG1. Interacts with DSC1 and DSC2. Interacts with PKP2. Interacts with PKP3 (via N-terminus); the interaction is required for PKP3 localization to desmosome cell-cell junctions. Interacts with DSG4. Post-translationally, may be phosphorylated by FER.

The protein localises to the cell junction. It is found in the adherens junction. Its subcellular location is the desmosome. The protein resides in the cytoplasm. It localises to the cytoskeleton. The protein localises to the cell membrane. It is found in the nucleus. In terms of biological role, common junctional plaque protein. The membrane-associated plaques are architectural elements in an important strategic position to influence the arrangement and function of both the cytoskeleton and the cells within the tissue. The presence of plakoglobin in both the desmosomes and in the intermediate junctions suggests that it plays a central role in the structure and function of submembranous plaques. Acts as a substrate for VE-PTP and is required by it to stimulate VE-cadherin function in endothelial cells. Can replace beta-catenin in E-cadherin/catenin adhesion complexes which are proposed to couple cadherins to the actin cytoskeleton. In Bos taurus (Bovine), this protein is Junction plakoglobin.